A 519-amino-acid polypeptide reads, in one-letter code: Ribonuclease Y (519 aa).

The chain crosses the membrane as a helical span at residues 3–23 (LMIFAYIAIGAVLGAGTGYLL). The KH domain maps to 209–272 (TVTAVTLPSE…QVAKMALERL (64 aa)). In terms of domain architecture, HD spans 335–428 (VLQHSLEVSA…VQAADSISGA (94 aa)).

The protein belongs to the RNase Y family.

The protein localises to the cell membrane. Endoribonuclease that initiates mRNA decay. The sequence is that of Ribonuclease Y from Nitratidesulfovibrio vulgaris (strain ATCC 29579 / DSM 644 / CCUG 34227 / NCIMB 8303 / VKM B-1760 / Hildenborough) (Desulfovibrio vulgaris).